Reading from the N-terminus, the 116-residue chain is Nucleoid-associated protein EUBELI_02017 (116 aa).

Residues 1-12 (MAKRGGFPGGMP) show a composition bias toward gly residues. The segment at 1-42 (MAKRGGFPGGMPGNMNNLMKQAQRMQRQMEEQQAELENKEFS) is disordered. A compositionally biased stretch (low complexity) spans 13–26 (GNMNNLMKQAQRMQ).

The protein belongs to the YbaB/EbfC family. Homodimer.

The protein localises to the cytoplasm. It is found in the nucleoid. Binds to DNA and alters its conformation. May be involved in regulation of gene expression, nucleoid organization and DNA protection. The polypeptide is Nucleoid-associated protein EUBELI_02017 (Lachnospira eligens (strain ATCC 27750 / DSM 3376 / VPI C15-48 / C15-B4) (Eubacterium eligens)).